The sequence spans 279 residues: Inorganic pyrophosphatase 2 (279 aa).

Asp12 functions as the Nucleophile in the catalytic mechanism. 2 residues coordinate Mg(2+): Asp12 and Asp14. Residue Asp14 is the Proton donor of the active site. Residues Asp23 and Asp98 each contribute to the substrate site. Residue Asp182 coordinates Mg(2+).

This sequence belongs to the HAD-like hydrolase superfamily. As to quaternary structure, tetramer. Requires Mg(2+) as cofactor.

It catalyses the reaction diphosphate + H2O = 2 phosphate + H(+). Its function is as follows. Catalyzes the specific cleavage of pyrophosphate. The protein is Inorganic pyrophosphatase 2 of Arabidopsis thaliana (Mouse-ear cress).